Here is a 329-residue protein sequence, read N- to C-terminus: Phosphate acyltransferase (329 aa).

Belongs to the PlsX family. In terms of assembly, homodimer. Probably interacts with PlsY.

Its subcellular location is the cytoplasm. The enzyme catalyses a fatty acyl-[ACP] + phosphate = an acyl phosphate + holo-[ACP]. Its pathway is lipid metabolism; phospholipid metabolism. In terms of biological role, catalyzes the reversible formation of acyl-phosphate (acyl-PO(4)) from acyl-[acyl-carrier-protein] (acyl-ACP). This enzyme utilizes acyl-ACP as fatty acyl donor, but not acyl-CoA. The sequence is that of Phosphate acyltransferase from Anoxybacillus flavithermus (strain DSM 21510 / WK1).